The chain runs to 545 residues: EH domain-containing protein 1 (545 aa).

EF-hand domains are found at residues 14-49 (ENQM…SNLP) and 50-83 (RPEL…VSLA). The EH domain maps to 15–93 (NQMIYKEWFE…QTGHEISHEV (79 aa)). Residues aspartate 27, aspartate 29, aspartate 31, arginine 33, aspartate 38, aspartate 61, tyrosine 67, and glutamate 72 each contribute to the Ca(2+) site. In terms of domain architecture, Dynamin-type G spans 194-429 (FDAKPMVMLL…DLLADLKDIP (236 aa)). The G1 motif stretch occupies residues 204–211 (GQYSTGKT). 204–211 (GQYSTGKT) lines the GTP pocket. Positions 230 to 231 (EP) are G2 motif. The G3 motif stretch occupies residues 292–295 (DTPG). Residues 309–313 (DFTGV) and lysine 359 contribute to the GTP site. Positions 358-361 (NKAD) are G4 motif. Residue valine 382 is a region of interest, G5 motif. 395–398 (SFSD) is a GTP binding site. Residues 467-490 (KAKAQQKLIDNLEDEFGKVQREHH) adopt a coiled-coil conformation.

This sequence belongs to the TRAFAC class dynamin-like GTPase superfamily. Dynamin/Fzo/YdjA family. EHD subfamily. Homooligomer, and heterooligomer with EHD2.

The protein resides in the endosome membrane. Its subcellular location is the cell membrane. It is found in the cytoplasm. It carries out the reaction GTP + H2O = GDP + phosphate + H(+). Functionally, involved in endocytosis positive regulation. Acts in early endocytic membrane fusion and membrane trafficking of recycling endosomes. Confers salt tolerance. This chain is EH domain-containing protein 1, found in Arabidopsis thaliana (Mouse-ear cress).